The primary structure comprises 396 residues: 1-deoxy-D-xylulose 5-phosphate reductoisomerase (396 aa).

Residues Thr10, Gly11, Ser12, Ile13, and Asn123 each coordinate NADPH. Lys124 serves as a coordination point for 1-deoxy-D-xylulose 5-phosphate. Glu125 is a binding site for NADPH. Asp149 contributes to the Mn(2+) binding site. Positions 150, 151, 185, and 208 each coordinate 1-deoxy-D-xylulose 5-phosphate. Glu151 lines the Mn(2+) pocket. Gly214 contacts NADPH. Positions 221, 226, 227, and 230 each coordinate 1-deoxy-D-xylulose 5-phosphate. Glu230 contributes to the Mn(2+) binding site.

The protein belongs to the DXR family. It depends on Mg(2+) as a cofactor. The cofactor is Mn(2+).

The enzyme catalyses 2-C-methyl-D-erythritol 4-phosphate + NADP(+) = 1-deoxy-D-xylulose 5-phosphate + NADPH + H(+). It functions in the pathway isoprenoid biosynthesis; isopentenyl diphosphate biosynthesis via DXP pathway; isopentenyl diphosphate from 1-deoxy-D-xylulose 5-phosphate: step 1/6. Catalyzes the NADPH-dependent rearrangement and reduction of 1-deoxy-D-xylulose-5-phosphate (DXP) to 2-C-methyl-D-erythritol 4-phosphate (MEP). This Shewanella baltica (strain OS155 / ATCC BAA-1091) protein is 1-deoxy-D-xylulose 5-phosphate reductoisomerase.